The sequence spans 430 residues: Long-chain specific acyl-CoA dehydrogenase, mitochondrial (430 aa).

The N-terminal 30 residues, 1 to 30, are a transit peptide targeting the mitochondrion; it reads MAARLLRGSLRVLGGHRAPRQLPAARCSHS. N6-acetyllysine is present on lysine 42. A Phosphoserine modification is found at serine 54. N6-acetyllysine; alternate is present on residues lysine 66 and lysine 81. An N6-succinyllysine; alternate mark is found at lysine 66 and lysine 81. N6-acetyllysine occurs at positions 92 and 95. The residue at position 165 (lysine 165) is an N6-succinyllysine. Residues 170–179 and 203–205 each bind FAD; these read IAMTEPGAGS and FIS. Serine 179 serves as a coordination point for substrate. Substrate is bound at residue 227-228; that stretch reads AH. N6-succinyllysine is present on lysine 240. Residues lysine 254 and lysine 279 each carry the N6-acetyllysine; alternate modification. An N6-succinyllysine; alternate mark is found at lysine 254 and lysine 279. Residues tyrosine 282 and 289–292 contribute to the substrate site; that span reads PQER. The active-site Proton acceptor is the glutamate 291. Position 317 (arginine 317) interacts with FAD. At lysine 318 the chain carries N6-acetyllysine. Lysine 322 bears the N6-acetyllysine; alternate mark. Lysine 322 carries the N6-succinyllysine; alternate modification. Glutamine 328 provides a ligand contact to FAD. Position 358 is an N6-acetyllysine (lysine 358). At serine 362 the chain carries Phosphoserine. Position 385 to 389 (385 to 389) interacts with FAD; that stretch reads QLHGG. 412–413 contributes to the substrate binding site; it reads GG. 414–416 is a binding site for FAD; sequence TNE.

This sequence belongs to the acyl-CoA dehydrogenase family. Homotetramer. It depends on FAD as a cofactor. In terms of processing, acetylation at Lys-318 and Lys-322 in proximity of the cofactor-binding sites strongly reduces catalytic activity. These sites are deacetylated by SIRT3.

It is found in the mitochondrion matrix. The enzyme catalyses a long-chain 2,3-saturated fatty acyl-CoA + oxidized [electron-transfer flavoprotein] + H(+) = a long-chain (2E)-enoyl-CoA + reduced [electron-transfer flavoprotein]. It catalyses the reaction hexanoyl-CoA + oxidized [electron-transfer flavoprotein] + H(+) = (2E)-hexenoyl-CoA + reduced [electron-transfer flavoprotein]. It carries out the reaction octanoyl-CoA + oxidized [electron-transfer flavoprotein] + H(+) = (2E)-octenoyl-CoA + reduced [electron-transfer flavoprotein]. The catalysed reaction is decanoyl-CoA + oxidized [electron-transfer flavoprotein] + H(+) = (2E)-decenoyl-CoA + reduced [electron-transfer flavoprotein]. The enzyme catalyses dodecanoyl-CoA + oxidized [electron-transfer flavoprotein] + H(+) = (2E)-dodecenoyl-CoA + reduced [electron-transfer flavoprotein]. It catalyses the reaction tetradecanoyl-CoA + oxidized [electron-transfer flavoprotein] + H(+) = (2E)-tetradecenoyl-CoA + reduced [electron-transfer flavoprotein]. It carries out the reaction oxidized [electron-transfer flavoprotein] + hexadecanoyl-CoA + H(+) = (2E)-hexadecenoyl-CoA + reduced [electron-transfer flavoprotein]. The catalysed reaction is octadecanoyl-CoA + oxidized [electron-transfer flavoprotein] + H(+) = (2E)-octadecenoyl-CoA + reduced [electron-transfer flavoprotein]. The enzyme catalyses eicosanoyl-CoA + oxidized [electron-transfer flavoprotein] + H(+) = (2E)-eicosenoyl-CoA + reduced [electron-transfer flavoprotein]. It catalyses the reaction docosanoyl-CoA + oxidized [electron-transfer flavoprotein] + H(+) = (2E)-docosenoyl-CoA + reduced [electron-transfer flavoprotein]. It carries out the reaction tetracosanoyl-CoA + oxidized [electron-transfer flavoprotein] + H(+) = (2E)-tetracosenoyl-CoA + reduced [electron-transfer flavoprotein]. The catalysed reaction is (5E)-tetradecenoyl-CoA + oxidized [electron-transfer flavoprotein] + H(+) = (2E,5E)-tetradecadienoyl-CoA + reduced [electron-transfer flavoprotein]. The enzyme catalyses (5Z)-tetradecenoyl-CoA + oxidized [electron-transfer flavoprotein] + H(+) = (2E,5Z)-tetradecadienoyl-CoA + reduced [electron-transfer flavoprotein]. It catalyses the reaction oxidized [electron-transfer flavoprotein] + (9Z)-octadecenoyl-CoA + H(+) = (2E,9Z)-octadecadienoyl-CoA + reduced [electron-transfer flavoprotein]. It participates in lipid metabolism; mitochondrial fatty acid beta-oxidation. In terms of biological role, long-chain specific acyl-CoA dehydrogenase is one of the acyl-CoA dehydrogenases that catalyze the first step of mitochondrial fatty acid beta-oxidation, an aerobic process breaking down fatty acids into acetyl-CoA and allowing the production of energy from fats. The first step of fatty acid beta-oxidation consists in the removal of one hydrogen from C-2 and C-3 of the straight-chain fatty acyl-CoA thioester, resulting in the formation of trans-2-enoyl-CoA. Among the different mitochondrial acyl-CoA dehydrogenases, long-chain specific acyl-CoA dehydrogenase can act on saturated and unsaturated acyl-CoAs with 6 to 24 carbons with a preference for 8 to 18 carbons long primary chains. The sequence is that of Long-chain specific acyl-CoA dehydrogenase, mitochondrial from Homo sapiens (Human).